Consider the following 235-residue polypeptide: Ribonuclease S-2 (235 aa).

An N-terminal signal peptide occupies residues 1 to 31 (MATVQKSQHSHFFLLVGCIVHLSNFCSTTTA). Residue Gln41 coordinates RNA. Cysteines 47 and 54 form a disulfide. Residue His66 coordinates RNA. Catalysis depends on His66, which acts as the Proton donor. Asn72 carries N-linked (GlcNAc...) asparagine glycosylation. 3 cysteine pairs are disulfide-bonded: Cys80/Cys129, Cys189/Cys217, and Cys200/Cys211. RNA-binding positions include 105 to 106 (DL), Arg108, and Phe118. The active site involves Gln122. Residue 125–126 (KH) coordinates RNA. His126 acts as the Proton acceptor in catalysis.

This sequence belongs to the RNase T2 family.

It is found in the secreted. The protein resides in the extracellular space. It carries out the reaction a ribonucleotidyl-ribonucleotide-RNA + H2O = a 3'-end 3'-phospho-ribonucleotide-RNA + a 5'-end dephospho-ribonucleoside-RNA + H(+). In terms of biological role, self-incompatibility (SI) is the inherited ability of a flowering plant to prevent self-fertilization by discriminating between self and non-self pollen during pollination. In many species, self-incompatibility is controlled by the single, multiallelic locus S. In Antirrhinum hispanicum (Snapdragon), this protein is Ribonuclease S-2 (S2).